The chain runs to 618 residues: Membrane protein insertase YidC (618 aa).

The next 6 membrane-spanning stretches (helical) occupy residues 3 to 23, 363 to 383, 439 to 459, 478 to 498, 520 to 540, and 545 to 565; these read KNTI…SFLS, WGLS…IVVF, LPML…PSAI, FITF…FCLL, PQMA…LFVL, and SGLN…MIIL.

Belongs to the OXA1/ALB3/YidC family. Type 1 subfamily. Interacts with the Sec translocase complex via SecD. Specifically interacts with transmembrane segments of nascent integral membrane proteins during membrane integration.

The protein resides in the cell inner membrane. Required for the insertion and/or proper folding and/or complex formation of integral membrane proteins into the membrane. Involved in integration of membrane proteins that insert both dependently and independently of the Sec translocase complex, as well as at least some lipoproteins. Aids folding of multispanning membrane proteins. In Bacteroides fragilis (strain ATCC 25285 / DSM 2151 / CCUG 4856 / JCM 11019 / LMG 10263 / NCTC 9343 / Onslow / VPI 2553 / EN-2), this protein is Membrane protein insertase YidC.